The primary structure comprises 226 residues: Small ribosomal subunit protein uS3 (226 aa).

The KH type-2 domain maps to 36–104 (IRKYLENRLS…KIQINIFEIK (69 aa)).

This sequence belongs to the universal ribosomal protein uS3 family. Part of the 30S ribosomal subunit. Forms a tight complex with proteins S10 and S14.

Functionally, binds the lower part of the 30S subunit head. Binds mRNA in the 70S ribosome, positioning it for translation. The sequence is that of Small ribosomal subunit protein uS3 from Karelsulcia muelleri (strain GWSS) (Sulcia muelleri).